The chain runs to 366 residues: Histidinol-phosphate aminotransferase (366 aa).

Lys228 bears the N6-(pyridoxal phosphate)lysine mark.

It belongs to the class-II pyridoxal-phosphate-dependent aminotransferase family. Histidinol-phosphate aminotransferase subfamily. As to quaternary structure, homodimer. Pyridoxal 5'-phosphate is required as a cofactor.

It catalyses the reaction L-histidinol phosphate + 2-oxoglutarate = 3-(imidazol-4-yl)-2-oxopropyl phosphate + L-glutamate. The protein operates within amino-acid biosynthesis; L-histidine biosynthesis; L-histidine from 5-phospho-alpha-D-ribose 1-diphosphate: step 7/9. The sequence is that of Histidinol-phosphate aminotransferase from Campylobacter fetus subsp. fetus (strain 82-40).